The sequence spans 212 residues: Cytidylate kinase (212 aa).

11–19 (GPAASGKGT) is an ATP binding site. A disordered region spans residues 50–69 (GGDPADPAASEEQARSLSRL).

Belongs to the cytidylate kinase family. Type 1 subfamily.

The protein localises to the cytoplasm. The catalysed reaction is CMP + ATP = CDP + ADP. It catalyses the reaction dCMP + ATP = dCDP + ADP. This chain is Cytidylate kinase, found in Acidiphilium cryptum (strain JF-5).